Here is a 417-residue protein sequence, read N- to C-terminus: MLAWLLNMLKEEFSLSEVADILGVSKETLRRWDTAGKLVSQRNDENNYRFYKKEQLKNFEQAQFLFKSQWPDETKISNNVYTVLELFAGAGGMALGLEKAGLKSVLLNEIDSHACKTLRKNRPEWNVVEGDVSQVDFTPYRNTVDVLAGGFPCQAFSYAGKKLGFEDTRGTLFFEFARAAKEINPKVLLAENVRGLLNHDAGRTLETIKNIITDLGYTLFEPRVLKAIFYKVPQKRERLIIVAVRNDLADGIDYEWPSSYNKILTLKDALKKGELYDSDVPESEGQKYPKRKAEILSMVPPGGYWRDLPEDIQKEYMLKSFYLGGGKTGMARRLSWDEPSLTLTCAPAQKQTERCHPEETRPLTVREYARIQTFPDEWVFEGPMSAKYKQIGNAVPVNLSFAVGKSVVHLLDKINKR.

The 334-residue stretch at 81–414 (YTVLELFAGA…KSVVHLLDKI (334 aa)) folds into the SAM-dependent MTase C5-type domain. Cysteine 153 is an active-site residue.

This sequence belongs to the class I-like SAM-binding methyltransferase superfamily. C5-methyltransferase family.

It catalyses the reaction a 2'-deoxycytidine in DNA + S-adenosyl-L-methionine = a 5-methyl-2'-deoxycytidine in DNA + S-adenosyl-L-homocysteine + H(+). Functionally, a methylase that recognizes the double-stranded sequence 5'-GGNCC-3', methylates C-? on both strands, and protects the DNA from cleavage by both the Eco47I and Eco47II endonucleases. This Escherichia coli protein is Type II methyltransferase M.Eco47II.